The sequence spans 255 residues: Protein N-terminal and lysine N-methyltransferase efm7 (255 aa).

The segment at 1–25 is disordered; that stretch reads MADNDFEGFGIFEEPEGFRPSTPPP. Residues Trp-58, 84–86, Asp-106, Trp-137, and Ser-162 each bind S-adenosyl-L-methionine; that span reads GAG.

This sequence belongs to the class I-like SAM-binding methyltransferase superfamily. EFM7 family.

Its subcellular location is the cytoplasm. In terms of biological role, S-adenosyl-L-methionine-dependent protein methyltransferase that trimethylates the N-terminal glycine 'Gly-2' of elongation factor 1-alpha, before also catalyzing the mono- and dimethylation of 'Lys-3'. The chain is Protein N-terminal and lysine N-methyltransferase efm7 from Schizosaccharomyces pombe (strain 972 / ATCC 24843) (Fission yeast).